Here is a 578-residue protein sequence, read N- to C-terminus: Zinc finger protein 248 (578 aa).

The 71-residue stretch at Val8–Pro78 folds into the KRAB domain. The C2H2-type 1; degenerate zinc finger occupies Thr239–His263. Lys340 is covalently cross-linked (Glycyl lysine isopeptide (Lys-Gly) (interchain with G-Cter in SUMO2)). 7 C2H2-type zinc fingers span residues Phe379–His401, Tyr407–His429, Tyr435–His457, Tyr463–His485, Phe491–His513, Tyr519–Thr542, and Tyr547–His569.

It belongs to the krueppel C2H2-type zinc-finger protein family.

It localises to the nucleus. Its function is as follows. May be involved in transcriptional regulation. This Pongo abelii (Sumatran orangutan) protein is Zinc finger protein 248 (ZNF248).